The sequence spans 78 residues: Small ribosomal subunit protein uS17 (78 aa).

It belongs to the universal ribosomal protein uS17 family. As to quaternary structure, part of the 30S ribosomal subunit.

Functionally, one of the primary rRNA binding proteins, it binds specifically to the 5'-end of 16S ribosomal RNA. This is Small ribosomal subunit protein uS17 from Parvibaculum lavamentivorans (strain DS-1 / DSM 13023 / NCIMB 13966).